The primary structure comprises 374 residues: DNA-directed RNA polymerase subunit alpha (374 aa).

The tract at residues M1 to D270 is alpha N-terminal domain (alpha-NTD). An alpha C-terminal domain (alpha-CTD) region spans residues K282–E374.

This sequence belongs to the RNA polymerase alpha chain family. As to quaternary structure, homodimer. The RNAP catalytic core consists of 2 alpha, 1 beta, 1 beta' and 1 omega subunit. When a sigma factor is associated with the core the holoenzyme is formed, which can initiate transcription.

The enzyme catalyses RNA(n) + a ribonucleoside 5'-triphosphate = RNA(n+1) + diphosphate. Functionally, DNA-dependent RNA polymerase catalyzes the transcription of DNA into RNA using the four ribonucleoside triphosphates as substrates. The protein is DNA-directed RNA polymerase subunit alpha of Ehrlichia ruminantium (strain Gardel).